We begin with the raw amino-acid sequence, 90 residues long: MKALKIRVEGIVQGVGFRYFTRRVAKSLGVKGYVMNMDDGSVFIHAEGDENALRRFLNEVAKGPPAAVVTNVSVEETTPEGYEDFTIKYY.

Residues alanine 3–tyrosine 89 enclose the Acylphosphatase-like domain. Active-site residues include arginine 18 and asparagine 36.

Belongs to the acylphosphatase family.

The enzyme catalyses an acyl phosphate + H2O = a carboxylate + phosphate + H(+). In Thermotoga maritima (strain ATCC 43589 / DSM 3109 / JCM 10099 / NBRC 100826 / MSB8), this protein is Acylphosphatase (acyP).